The chain runs to 389 residues: MILQEQRRLRLWLYKSSLFISVLFLIGFSIVLPVDSIVQAIQSENNGFNTIIVIGSLAVFFVAAVTILIGRMLLHKSCLKDIPRRYIPVTNADLPHKSSRKMVIHNMERSKKLSGLFKTPKDPVIHPGLEPPARCDDPNTPKILPEYLNYKICIKSATDRLKYYGLFLNSASDDVKSSQTFTDLVKSQFIKGNHNKRQVQRAKDFIELYERIRFSGDEVSRSEFIQFAENCIYFSDLMITMDITKVGLGNISTRSQLSFNIAGSSVDRKLRKLNTARSNQISRLSSGQYPDITAFRYDTSNSDYHRQETDEDDFALDDMDYFPSVPPYMIRRNSTNTVSMRIPTSNSDDQYNLGFNEIGDEDIQNNDQIRRYMSNTSKTDSFKTVIHNG.

Residues 1–17 are Cytoplasmic-facing; it reads MILQEQRRLRLWLYKSS. A helical transmembrane segment spans residues 18–38; that stretch reads LFISVLFLIGFSIVLPVDSIV. Over 39–49 the chain is Extracellular; that stretch reads QAIQSENNGFN. Residues 50–70 traverse the membrane as a helical segment; that stretch reads TIIVIGSLAVFFVAAVTILIG. At 71-389 the chain is on the cytoplasmic side; that stretch reads RMLLHKSCLK…DSFKTVIHNG (319 aa).

Belongs to the DLT1 family.

The protein localises to the membrane. Its function is as follows. Required for growth under high-pressure and low-temperature conditions. This chain is Defect at low temperature protein 1 (DLT1), found in Candida glabrata (strain ATCC 2001 / BCRC 20586 / JCM 3761 / NBRC 0622 / NRRL Y-65 / CBS 138) (Yeast).